Consider the following 249-residue polypeptide: Tumor necrosis factor ligand superfamily member 12 (249 aa).

Topologically, residues 1–21 (MAARRSQRRRGRRGEPGTALL) are cytoplasmic. Residues 22 to 45 (APLVLSLGLALACLGLLLVVVSLG) form a helical; Signal-anchor for type II membrane protein membrane-spanning segment. Residues 46–249 (SWATLSAQEP…LTYFGLFQVH (204 aa)) are Extracellular-facing. The segment at 52 to 78 (AQEPSQEELTAEDRREPPELNPQTEES) is disordered. In terms of domain architecture, THD spans 107–248 (IAAHYEVHPR…FLTYFGLFQV (142 aa)). N-linked (GlcNAc...) asparagine glycosylation is present at Asn-139. A disulfide bridge connects residues Cys-191 and Cys-210.

Belongs to the tumor necrosis factor family. As to quaternary structure, homotrimer. Interacts with the angiogenic factor AGGF1/VG5Q. In terms of processing, the soluble form is produced from the membrane form by proteolytic processing. As to expression, widely expressed.

Its subcellular location is the cell membrane. The protein resides in the secreted. Functionally, binds to FN14 and possibly also to TNRFSF12/APO3. Weak inducer of apoptosis in some cell types. Mediates NF-kappa-B activation. Promotes angiogenesis and the proliferation of endothelial cells. Also involved in induction of inflammatory cytokines. Promotes IL8 secretion. The polypeptide is Tumor necrosis factor ligand superfamily member 12 (Tnfsf12) (Mus musculus (Mouse)).